Reading from the N-terminus, the 319-residue chain is tRNA pseudouridine synthase B (319 aa).

Residue aspartate 49 is the Nucleophile of the active site.

It belongs to the pseudouridine synthase TruB family. Type 1 subfamily.

It catalyses the reaction uridine(55) in tRNA = pseudouridine(55) in tRNA. Responsible for synthesis of pseudouridine from uracil-55 in the psi GC loop of transfer RNAs. The protein is tRNA pseudouridine synthase B of Aeromonas salmonicida (strain A449).